The chain runs to 63 residues: Small ribosomal subunit protein eS30 (63 aa).

A disordered region spans residues 1–33 (MGKVHGSLARAGKVKSQTPKVEKQEKPKKPQGR).

It belongs to the eukaryotic ribosomal protein eS30 family. Component of the small ribosomal subunit. Mature ribosomes consist of a small (40S) and a large (60S) subunit. The 40S subunit contains about 32 different proteins and 1 molecule of RNA (18S). The 60S subunit contains 45 different proteins and 3 molecules of RNA (25S, 5.8S and 5S).

Its subcellular location is the cytoplasm. Component of the ribosome, a large ribonucleoprotein complex responsible for the synthesis of proteins in the cell. The small ribosomal subunit (SSU) binds messenger RNAs (mRNAs) and translates the encoded message by selecting cognate aminoacyl-transfer RNA (tRNA) molecules. The large subunit (LSU) contains the ribosomal catalytic site termed the peptidyl transferase center (PTC), which catalyzes the formation of peptide bonds, thereby polymerizing the amino acids delivered by tRNAs into a polypeptide chain. The nascent polypeptides leave the ribosome through a tunnel in the LSU and interact with protein factors that function in enzymatic processing, targeting, and the membrane insertion of nascent chains at the exit of the ribosomal tunnel. This is Small ribosomal subunit protein eS30 (RPS30) from Candida albicans (strain SC5314 / ATCC MYA-2876) (Yeast).